The primary structure comprises 582 residues: Protein alan shepard (582 aa).

Pro residues predominate over residues 1-12 (MHPRYSPAPPPQ). Residues 1-73 (MHPRYSPAPP…AAPPTSRSAF (73 aa)) are disordered. Position 5 is a phosphotyrosine (Tyr-5). Residues 13-24 (QQQQMGGPLHQQ) are compositionally biased toward low complexity. Positions 25-36 (QGGGGGGGGGIR) are enriched in gly residues. Residues 39–57 (SNAQQLPPQIPRSQNYSNG) are compositionally biased toward polar residues. Low complexity predominate over residues 58-72 (SSSSAAAAPPTSRSA). Residues Tyr-125 and Tyr-142 each carry the phosphotyrosine modification. Residues 164-225 (PATTTYGQRV…TVQNQNQQGG (62 aa)) are disordered. Residues 178–225 (SPSNTNSSSSSNTGSQSGTLSTSLSNTTNTNTNMGPNGTVQNQNQQGG) are compositionally biased toward low complexity. RRM domains are found at residues 231–304 (TNLY…MAKQ) and 310–389 (TNLY…FADG). A disordered region spans residues 555-582 (PMTDSEQASTAASPDEAYTQYPHQAAPK).

Functionally, has a role in the perception of gravity. The sequence is that of Protein alan shepard from Drosophila yakuba (Fruit fly).